The sequence spans 156 residues: Small ribosomal subunit protein uS7 (156 aa).

The protein belongs to the universal ribosomal protein uS7 family. Part of the 30S ribosomal subunit. Contacts proteins S9 and S11.

Its function is as follows. One of the primary rRNA binding proteins, it binds directly to 16S rRNA where it nucleates assembly of the head domain of the 30S subunit. Is located at the subunit interface close to the decoding center, probably blocks exit of the E-site tRNA. The chain is Small ribosomal subunit protein uS7 from Shewanella sp. (strain W3-18-1).